The sequence spans 328 residues: Tetraacyldisaccharide 4'-kinase (328 aa).

58 to 65 (TMGGAGKT) is an ATP binding site.

This sequence belongs to the LpxK family.

The enzyme catalyses a lipid A disaccharide + ATP = a lipid IVA + ADP + H(+). It participates in glycolipid biosynthesis; lipid IV(A) biosynthesis; lipid IV(A) from (3R)-3-hydroxytetradecanoyl-[acyl-carrier-protein] and UDP-N-acetyl-alpha-D-glucosamine: step 6/6. Functionally, transfers the gamma-phosphate of ATP to the 4'-position of a tetraacyldisaccharide 1-phosphate intermediate (termed DS-1-P) to form tetraacyldisaccharide 1,4'-bis-phosphate (lipid IVA). This is Tetraacyldisaccharide 4'-kinase from Phenylobacterium zucineum (strain HLK1).